The chain runs to 403 residues: Tryptophan synthase beta chain (403 aa).

An N6-(pyridoxal phosphate)lysine modification is found at lysine 90.

Belongs to the TrpB family. As to quaternary structure, tetramer of two alpha and two beta chains. Pyridoxal 5'-phosphate serves as cofactor.

It carries out the reaction (1S,2R)-1-C-(indol-3-yl)glycerol 3-phosphate + L-serine = D-glyceraldehyde 3-phosphate + L-tryptophan + H2O. It functions in the pathway amino-acid biosynthesis; L-tryptophan biosynthesis; L-tryptophan from chorismate: step 5/5. Its function is as follows. The beta subunit is responsible for the synthesis of L-tryptophan from indole and L-serine. The sequence is that of Tryptophan synthase beta chain from Leifsonia xyli subsp. xyli (strain CTCB07).